A 139-amino-acid polypeptide reads, in one-letter code: Ribosome-binding factor A (139 aa).

The segment at 112 to 139 (EARTQGQAAPAPDVEPAPGAAPDDEAEE) is disordered. The segment covering 119 to 132 (AAPAPDVEPAPGAA) has biased composition (low complexity).

It belongs to the RbfA family. Monomer. Binds 30S ribosomal subunits, but not 50S ribosomal subunits or 70S ribosomes.

It is found in the cytoplasm. Functionally, one of several proteins that assist in the late maturation steps of the functional core of the 30S ribosomal subunit. Associates with free 30S ribosomal subunits (but not with 30S subunits that are part of 70S ribosomes or polysomes). Required for efficient processing of 16S rRNA. May interact with the 5'-terminal helix region of 16S rRNA. This chain is Ribosome-binding factor A, found in Anaeromyxobacter dehalogenans (strain 2CP-1 / ATCC BAA-258).